The sequence spans 181 residues: Probable pyruvoyl-dependent arginine decarboxylase (181 aa).

Serine 43 carries the post-translational modification Pyruvic acid (Ser).

This sequence belongs to the PdaD family. Pyruvate serves as cofactor.

The catalysed reaction is L-arginine + H(+) = agmatine + CO2. This chain is Probable pyruvoyl-dependent arginine decarboxylase, found in Chlorobium limicola (strain DSM 245 / NBRC 103803 / 6330).